A 419-amino-acid chain; its full sequence is Dynein regulatory complex protein 9 (419 aa).

Disordered stretches follow at residues 1–47 (MEGE…SPEV) and 393–419 (SFKMPKKEKDDSKDAKGKEKDKRRGKK). The span at 34 to 44 (EELEEEEEETS) shows a compositional bias: acidic residues. Residues 371 to 400 (ELRSIVKLQAWWRGTVVRREIGSFKMPKKE) enclose the IQ domain.

Belongs to the DRC9 family. Component of the nexin-dynein regulatory complex (N-DRC). Interacts (via IQ domain) with CALM when calcium levels are low. Does not interact with CALM in the presence of Ca(2+). Interacts with the HSP70 proteins HSPA1L and HSPA8. May form a complex with CAMK4 and HSP70.

It localises to the cytoplasm. It is found in the cell projection. The protein resides in the cilium. Its subcellular location is the flagellum. The protein localises to the cytoskeleton. It localises to the flagellum axoneme. Its function is as follows. Component of the nexin-dynein regulatory complex (N-DRC), a key regulator of ciliary/flagellar motility which maintains the alignment and integrity of the distal axoneme and regulates microtubule sliding in motile axonemes. Binds calmodulin when cellular Ca(2+) levels are low and thereby contributes to the regulation of calcium and calmodulin-dependent protein kinase IV (CAMK4) activity; contributes to the regulation of CAMK4 signaling cascades. Required for normal axoneme assembly in sperm flagella, normal sperm tail formation and for male fertility. The protein is Dynein regulatory complex protein 9 (Iqcg) of Rattus norvegicus (Rat).